Reading from the N-terminus, the 799-residue chain is Dipeptidyl peptidase family member 1 (799 aa).

The Cytoplasmic segment spans residues 1-31 (MTAEADLLEGYDEELGGNESQKRDCKGITTA). Residues 32 to 52 (IVVVLLILVMIFAALVFFTPL) form a helical; Signal-anchor for type II membrane protein membrane-spanning segment. At 53–799 (FAAKSFGSWR…FLRQCFYTDK (747 aa)) the chain is on the lumenal side. N-linked (GlcNAc...) asparagine glycans are attached at residues Asn-64, Asn-138, Asn-267, and Asn-335. A disulfide bridge links Cys-474 with Cys-477. Residue Asn-481 is glycosylated (N-linked (GlcNAc...) asparagine). A disulfide bridge links Cys-482 with Cys-500. Asn-512 is a glycosylation site (N-linked (GlcNAc...) asparagine). Active-site charge relay system residues include Ser-669, Asp-742, and His-774. An intrachain disulfide couples Cys-689 to Cys-794.

Belongs to the peptidase S9B family. DPPIV subfamily.

It localises to the cell membrane. Removes N-terminal dipeptides sequentially from polypeptides. Essential for control of distal tip cell migration. The chain is Dipeptidyl peptidase family member 1 (dpf-1) from Caenorhabditis elegans.